Here is a 119-residue protein sequence, read N- to C-terminus: Large ribosomal subunit protein uL18 (119 aa).

The protein belongs to the universal ribosomal protein uL18 family. Part of the 50S ribosomal subunit; part of the 5S rRNA/L5/L18/L25 subcomplex. Contacts the 5S and 23S rRNAs.

Its function is as follows. This is one of the proteins that bind and probably mediate the attachment of the 5S RNA into the large ribosomal subunit, where it forms part of the central protuberance. The polypeptide is Large ribosomal subunit protein uL18 (Legionella pneumophila (strain Paris)).